The chain runs to 426 residues: Serine--tRNA ligase (426 aa).

233–235 (TAE) lines the L-serine pocket. ATP is bound at residue 264–266 (RRE). Residue glutamate 287 participates in L-serine binding. 351–354 (EISS) lines the ATP pocket. Serine 386 lines the L-serine pocket.

This sequence belongs to the class-II aminoacyl-tRNA synthetase family. Type-1 seryl-tRNA synthetase subfamily. In terms of assembly, homodimer. The tRNA molecule binds across the dimer.

It localises to the cytoplasm. It carries out the reaction tRNA(Ser) + L-serine + ATP = L-seryl-tRNA(Ser) + AMP + diphosphate + H(+). It catalyses the reaction tRNA(Sec) + L-serine + ATP = L-seryl-tRNA(Sec) + AMP + diphosphate + H(+). It participates in aminoacyl-tRNA biosynthesis; selenocysteinyl-tRNA(Sec) biosynthesis; L-seryl-tRNA(Sec) from L-serine and tRNA(Sec): step 1/1. In terms of biological role, catalyzes the attachment of serine to tRNA(Ser). Is also able to aminoacylate tRNA(Sec) with serine, to form the misacylated tRNA L-seryl-tRNA(Sec), which will be further converted into selenocysteinyl-tRNA(Sec). In Thermosipho africanus (strain TCF52B), this protein is Serine--tRNA ligase.